We begin with the raw amino-acid sequence, 362 residues long: Alanine racemase (362 aa).

Lysine 35 acts as the Proton acceptor; specific for D-alanine in catalysis. The residue at position 35 (lysine 35) is an N6-(pyridoxal phosphate)lysine. Residue arginine 130 participates in substrate binding. Catalysis depends on tyrosine 257, which acts as the Proton acceptor; specific for L-alanine. Methionine 305 is a binding site for substrate.

The protein belongs to the alanine racemase family. Pyridoxal 5'-phosphate serves as cofactor.

It catalyses the reaction L-alanine = D-alanine. Its pathway is amino-acid biosynthesis; D-alanine biosynthesis; D-alanine from L-alanine: step 1/1. Its function is as follows. Catalyzes the interconversion of L-alanine and D-alanine. May also act on other amino acids. The protein is Alanine racemase (alr) of Nitrosomonas europaea (strain ATCC 19718 / CIP 103999 / KCTC 2705 / NBRC 14298).